A 150-amino-acid polypeptide reads, in one-letter code: uncharacterized protein (150 aa).

The N-terminal stretch at methionine 1–glycine 21 is a signal peptide.

This is an uncharacterized protein from Mycobacterium tuberculosis (strain CDC 1551 / Oshkosh).